The following is a 386-amino-acid chain: Cell division protein FtsZ (386 aa).

GTP-binding positions include 21–25 (GGGGN), 108–110 (GTG), E139, R143, and N187.

It belongs to the FtsZ family. Homodimer. Polymerizes to form a dynamic ring structure in a strictly GTP-dependent manner. Interacts directly with several other division proteins.

It is found in the cytoplasm. Functionally, essential cell division protein that forms a contractile ring structure (Z ring) at the future cell division site. The regulation of the ring assembly controls the timing and the location of cell division. One of the functions of the FtsZ ring is to recruit other cell division proteins to the septum to produce a new cell wall between the dividing cells. Binds GTP and shows GTPase activity. This chain is Cell division protein FtsZ, found in Coxiella burnetii (strain RSA 493 / Nine Mile phase I).